Consider the following 202-residue polypeptide: Cyclin-U4-1 (202 aa).

It belongs to the cyclin family. Cyclin U/P subfamily. As to quaternary structure, interacts with CDKA-1. In terms of tissue distribution, expressed in roots, stems and flowers. Expressed in the shoot apex, leaf primordia and young leaves.

This chain is Cyclin-U4-1 (CYCU4-1), found in Arabidopsis thaliana (Mouse-ear cress).